A 199-amino-acid polypeptide reads, in one-letter code: Recombination protein RecR (199 aa).

A C4-type zinc finger spans residues cysteine 57–cysteine 72. Residues glutamate 81–proline 176 form the Toprim domain.

The protein belongs to the RecR family.

Functionally, may play a role in DNA repair. It seems to be involved in an RecBC-independent recombinational process of DNA repair. It may act with RecF and RecO. In Shewanella woodyi (strain ATCC 51908 / MS32), this protein is Recombination protein RecR.